Here is a 727-residue protein sequence, read N- to C-terminus: Elongation factor 2 (727 aa).

Positions 19–260 constitute a tr-type G domain; the sequence is DQIRNIGICA…MVVTHLPNPV (242 aa). GTP contacts are provided by residues 28–35, 94–98, and 148–151; these read AHIDHGKT, DTPGH, and NKVD. Position 603 is a diphthamide (H603).

It belongs to the TRAFAC class translation factor GTPase superfamily. Classic translation factor GTPase family. EF-G/EF-2 subfamily.

It localises to the cytoplasm. In terms of biological role, catalyzes the GTP-dependent ribosomal translocation step during translation elongation. During this step, the ribosome changes from the pre-translocational (PRE) to the post-translocational (POST) state as the newly formed A-site-bound peptidyl-tRNA and P-site-bound deacylated tRNA move to the P and E sites, respectively. Catalyzes the coordinated movement of the two tRNA molecules, the mRNA and conformational changes in the ribosome. The chain is Elongation factor 2 from Methanococcus aeolicus (strain ATCC BAA-1280 / DSM 17508 / OCM 812 / Nankai-3).